Consider the following 234-residue polypeptide: Peptidyl-prolyl cis-trans isomerase FKBP17-3, chloroplastic (234 aa).

Residues 1–28 constitute a chloroplast transit peptide; sequence MATLFTATVPSHHRFVSPSQHPKQSLLS. The PPIase FKBP-type domain occupies 130–228; the sequence is GYLVVFDVKG…DYIIEVDTVY (99 aa).

Belongs to the FKBP-type PPIase family.

It localises to the plastid. The protein localises to the chloroplast thylakoid lumen. The enzyme catalyses [protein]-peptidylproline (omega=180) = [protein]-peptidylproline (omega=0). Functionally, PPIases accelerate the folding of proteins. It catalyzes the cis-trans isomerization of proline imidic peptide bonds in oligopeptides. This chain is Peptidyl-prolyl cis-trans isomerase FKBP17-3, chloroplastic (FKBP17-3), found in Arabidopsis thaliana (Mouse-ear cress).